A 183-amino-acid polypeptide reads, in one-letter code: RNA pyrophosphohydrolase (183 aa).

In terms of domain architecture, Nudix hydrolase spans 6 to 149; that stretch reads GYRPNVGIIL…KREVYRLALE (144 aa). A Nudix box motif is present at residues 38 to 59; the sequence is GGINAGETPEQAMFRELEEEVG.

This sequence belongs to the Nudix hydrolase family. RppH subfamily. The cofactor is a divalent metal cation.

Functionally, accelerates the degradation of transcripts by removing pyrophosphate from the 5'-end of triphosphorylated RNA, leading to a more labile monophosphorylated state that can stimulate subsequent ribonuclease cleavage. In Thiobacillus denitrificans (strain ATCC 25259 / T1), this protein is RNA pyrophosphohydrolase.